The chain runs to 101 residues: Urease subunit beta (101 aa).

This sequence belongs to the urease beta subunit family. In terms of assembly, heterotrimer of UreA (gamma), UreB (beta) and UreC (alpha) subunits. Three heterotrimers associate to form the active enzyme.

It is found in the cytoplasm. It catalyses the reaction urea + 2 H2O + H(+) = hydrogencarbonate + 2 NH4(+). The protein operates within nitrogen metabolism; urea degradation; CO(2) and NH(3) from urea (urease route): step 1/1. This Burkholderia ambifaria (strain ATCC BAA-244 / DSM 16087 / CCUG 44356 / LMG 19182 / AMMD) (Burkholderia cepacia (strain AMMD)) protein is Urease subunit beta.